The primary structure comprises 61 residues: Short neurotoxin 2 (61 aa).

Cystine bridges form between C3-C23, C17-C40, C42-C53, and C54-C59.

The protein belongs to the three-finger toxin family. Short-chain subfamily. Type I alpha-neurotoxin sub-subfamily. Expressed by the venom gland.

It localises to the secreted. Its function is as follows. Binds to muscle nicotinic acetylcholine receptor (nAChR) and inhibit acetylcholine from binding to the receptor, thereby impairing neuromuscular transmission. In Naja haje haje (Egyptian cobra), this protein is Short neurotoxin 2.